A 79-amino-acid chain; its full sequence is D-alanyl carrier protein (79 aa).

The region spanning 1–77 (MTVEEKIIDA…KIVEGVKELQ (77 aa)) is the Carrier domain. Ser35 is subject to O-(pantetheine 4'-phosphoryl)serine.

Belongs to the DltC family. Post-translationally, 4'-phosphopantetheine is transferred from CoA to a specific serine of apo-DCP.

It is found in the cytoplasm. It participates in cell wall biogenesis; lipoteichoic acid biosynthesis. In terms of biological role, carrier protein involved in the D-alanylation of lipoteichoic acid (LTA). The loading of thioester-linked D-alanine onto DltC is catalyzed by D-alanine--D-alanyl carrier protein ligase DltA. The DltC-carried D-alanyl group is further transferred to cell membrane phosphatidylglycerol (PG) by forming an ester bond, probably catalyzed by DltD. D-alanylation of LTA plays an important role in modulating the properties of the cell wall in Gram-positive bacteria, influencing the net charge of the cell wall. This chain is D-alanyl carrier protein, found in Streptococcus uberis (strain ATCC BAA-854 / 0140J).